Here is a 348-residue protein sequence, read N- to C-terminus: Uroporphyrinogen decarboxylase (348 aa).

Substrate is bound by residues 27–31, Phe46, Asp76, Tyr152, Ser207, and His320; that span reads RQAGR.

The protein belongs to the uroporphyrinogen decarboxylase family. As to quaternary structure, homodimer.

The protein resides in the cytoplasm. The enzyme catalyses uroporphyrinogen III + 4 H(+) = coproporphyrinogen III + 4 CO2. It participates in porphyrin-containing compound metabolism; protoporphyrin-IX biosynthesis; coproporphyrinogen-III from 5-aminolevulinate: step 4/4. Functionally, catalyzes the decarboxylation of four acetate groups of uroporphyrinogen-III to yield coproporphyrinogen-III. The polypeptide is Uroporphyrinogen decarboxylase (Bacillus mycoides (strain KBAB4) (Bacillus weihenstephanensis)).